A 155-amino-acid chain; its full sequence is Trypsin/factor XIIA inhibitor (155 aa).

Positions 1 to 28 (MASSSSSSHRRLILAAAVLLSVLAAASA) are cleaved as a signal peptide. 5 cysteine pairs are disulfide-bonded: cysteine 34–cysteine 83, cysteine 48–cysteine 72, cysteine 57–cysteine 114, cysteine 73–cysteine 132, and cysteine 85–cysteine 143. Arginine 62 is an active-site residue. Positions 139-155 (GVAECPWILGGGTMPSK) are cleaved as a propeptide — C-terminal peptide.

It belongs to the protease inhibitor I6 (cereal trypsin/alpha-amylase inhibitor) family. As to quaternary structure, monomer.

The protein resides in the secreted. Potent inhibitor of mammalian trypsin and a specific inhibitor of factor XIIa (activated hageman factor). The polypeptide is Trypsin/factor XIIA inhibitor (Zea mays (Maize)).